Consider the following 513-residue polypeptide: Type-2 serine--tRNA ligase (513 aa).

Residue Ala312 coordinates L-serine. Cys314 provides a ligand contact to Zn(2+). Arg344 is an L-serine binding site. Residues Arg344–Glu346 and Arg355–Val356 contribute to the ATP site. Arg361–Glu363 contacts L-serine. The Zn(2+) site is built by Glu363 and Cys467. ATP is bound at residue Arg474.

This sequence belongs to the class-II aminoacyl-tRNA synthetase family. Type-2 seryl-tRNA synthetase subfamily. Homodimer. The cofactor is Zn(2+).

It is found in the cytoplasm. It carries out the reaction tRNA(Ser) + L-serine + ATP = L-seryl-tRNA(Ser) + AMP + diphosphate + H(+). The enzyme catalyses tRNA(Sec) + L-serine + ATP = L-seryl-tRNA(Sec) + AMP + diphosphate + H(+). It participates in aminoacyl-tRNA biosynthesis; selenocysteinyl-tRNA(Sec) biosynthesis; L-seryl-tRNA(Sec) from L-serine and tRNA(Sec): step 1/1. Functionally, catalyzes the attachment of serine to tRNA(Ser). Is also able to aminoacylate tRNA(Sec) with serine, to form the misacylated tRNA L-seryl-tRNA(Sec), which will be further converted into selenocysteinyl-tRNA(Sec). This is Type-2 serine--tRNA ligase (serS) from Methanothermobacter thermautotrophicus (strain ATCC 29096 / DSM 1053 / JCM 10044 / NBRC 100330 / Delta H) (Methanobacterium thermoautotrophicum).